Reading from the N-terminus, the 210-residue chain is Urease accessory protein UreG (210 aa).

Position 14-21 (14-21 (GPVGSGKT)) interacts with GTP.

Belongs to the SIMIBI class G3E GTPase family. UreG subfamily. As to quaternary structure, homodimer. UreD, UreF and UreG form a complex that acts as a GTP-hydrolysis-dependent molecular chaperone, activating the urease apoprotein by helping to assemble the nickel containing metallocenter of UreC. The UreE protein probably delivers the nickel.

Its subcellular location is the cytoplasm. Functionally, facilitates the functional incorporation of the urease nickel metallocenter. This process requires GTP hydrolysis, probably effectuated by UreG. This is Urease accessory protein UreG from Rhodopseudomonas palustris (strain BisA53).